The chain runs to 363 residues: Peptide chain release factor 1 (363 aa).

Gln237 bears the N5-methylglutamine mark. A compositionally biased stretch (basic and acidic residues) spans 284-296 (EDEKRRSAEESTR). Residues 284–305 (EDEKRRSAEESTRRSLVASGDR) form a disordered region.

This sequence belongs to the prokaryotic/mitochondrial release factor family. In terms of processing, methylated by PrmC. Methylation increases the termination efficiency of RF1.

Its subcellular location is the cytoplasm. Functionally, peptide chain release factor 1 directs the termination of translation in response to the peptide chain termination codons UAG and UAA. The sequence is that of Peptide chain release factor 1 from Shewanella baltica (strain OS185).